Here is a 671-residue protein sequence, read N- to C-terminus: UvrABC system protein B (671 aa).

One can recognise a Helicase ATP-binding domain in the interval 26–183; sequence EGLENGLAHQ…RRLSELQYSR (158 aa). Residue 39–46 participates in ATP binding; the sequence is GVTGSGKT. The Beta-hairpin motif lies at 92–115; sequence YYDYYQPEAYVPSSDTFIEKDASV. The Helicase C-terminal domain maps to 431-597; that stretch reads QVDDLLSEIR…GLNKKIGDIL (167 aa). Residues 631–666 enclose the UVR domain; sequence DQKIRELEAKMYTYAQNLEFEQAAELRDQVHQLRQQ.

This sequence belongs to the UvrB family. In terms of assembly, forms a heterotetramer with UvrA during the search for lesions. Interacts with UvrC in an incision complex.

The protein resides in the cytoplasm. Its function is as follows. The UvrABC repair system catalyzes the recognition and processing of DNA lesions. A damage recognition complex composed of 2 UvrA and 2 UvrB subunits scans DNA for abnormalities. Upon binding of the UvrA(2)B(2) complex to a putative damaged site, the DNA wraps around one UvrB monomer. DNA wrap is dependent on ATP binding by UvrB and probably causes local melting of the DNA helix, facilitating insertion of UvrB beta-hairpin between the DNA strands. Then UvrB probes one DNA strand for the presence of a lesion. If a lesion is found the UvrA subunits dissociate and the UvrB-DNA preincision complex is formed. This complex is subsequently bound by UvrC and the second UvrB is released. If no lesion is found, the DNA wraps around the other UvrB subunit that will check the other stand for damage. This Yersinia pseudotuberculosis serotype IB (strain PB1/+) protein is UvrABC system protein B.